The following is a 323-amino-acid chain: Acetyl-coenzyme A carboxylase carboxyl transferase subunit alpha (323 aa).

Residues 40–293 (LAEKSLQLTK…RKALAESLKT (254 aa)) enclose the CoA carboxyltransferase C-terminal domain.

Belongs to the AccA family. As to quaternary structure, acetyl-CoA carboxylase is a heterohexamer composed of biotin carboxyl carrier protein (AccB), biotin carboxylase (AccC) and two subunits each of ACCase subunit alpha (AccA) and ACCase subunit beta (AccD).

It localises to the cytoplasm. The catalysed reaction is N(6)-carboxybiotinyl-L-lysyl-[protein] + acetyl-CoA = N(6)-biotinyl-L-lysyl-[protein] + malonyl-CoA. The protein operates within lipid metabolism; malonyl-CoA biosynthesis; malonyl-CoA from acetyl-CoA: step 1/1. Its function is as follows. Component of the acetyl coenzyme A carboxylase (ACC) complex. First, biotin carboxylase catalyzes the carboxylation of biotin on its carrier protein (BCCP) and then the CO(2) group is transferred by the carboxyltransferase to acetyl-CoA to form malonyl-CoA. The protein is Acetyl-coenzyme A carboxylase carboxyl transferase subunit alpha of Polynucleobacter necessarius subsp. necessarius (strain STIR1).